The primary structure comprises 793 residues: Protocadherin beta-7 (793 aa).

The signal sequence occupies residues 1 to 26; sequence MEARVERAVQKRQVLFLCVFLGMSWA. Residues 27–688 are Extracellular-facing; it reads GAEPLRYFVA…DQANLLTVYL (662 aa). Cadherin domains are found at residues 35-133, 138-242, 247-347, 352-451, and 456-561; these read VAEE…APVF, ISLK…APDF, YKVQ…RPEL, LTSP…APAF, and YTLF…SPFV. A glycan (N-linked (GlcNAc...) asparagine) is linked at Asn169. Asn418 and Asn436 each carry an N-linked (GlcNAc...) asparagine glycan. N-linked (GlcNAc...) asparagine glycosylation occurs at Asn567. Positions 568-671 constitute a Cadherin 6 domain; that stretch reads SSAPCTEPLP…LVDGFSQPYL (104 aa). Residues 689–709 form a helical membrane-spanning segment; that stretch reads VVALASVSSLFLLSVLLFVAV. The Cytoplasmic portion of the chain corresponds to 710-793; that stretch reads RLCRRSRAAP…NRPFQNNLGF (84 aa).

Its subcellular location is the cell membrane. Its function is as follows. Potential calcium-dependent cell-adhesion protein. May be involved in the establishment and maintenance of specific neuronal connections in the brain. This Pan troglodytes (Chimpanzee) protein is Protocadherin beta-7 (PCDHB7).